The chain runs to 220 residues: Peptide methionine sulfoxide reductase MsrA (220 aa).

Cys54 is an active-site residue.

It belongs to the MsrA Met sulfoxide reductase family.

The enzyme catalyses L-methionyl-[protein] + [thioredoxin]-disulfide + H2O = L-methionyl-(S)-S-oxide-[protein] + [thioredoxin]-dithiol. It carries out the reaction [thioredoxin]-disulfide + L-methionine + H2O = L-methionine (S)-S-oxide + [thioredoxin]-dithiol. Its function is as follows. Has an important function as a repair enzyme for proteins that have been inactivated by oxidation. Catalyzes the reversible oxidation-reduction of methionine sulfoxide in proteins to methionine. The chain is Peptide methionine sulfoxide reductase MsrA from Salinispora arenicola (strain CNS-205).